Reading from the N-terminus, the 173-residue chain is Crossover junction endodeoxyribonuclease RuvC (173 aa).

Residues Asp-8, Glu-67, and Asp-139 contribute to the active site. Mg(2+)-binding residues include Asp-8, Glu-67, and Asp-139.

The protein belongs to the RuvC family. As to quaternary structure, homodimer which binds Holliday junction (HJ) DNA. The HJ becomes 2-fold symmetrical on binding to RuvC with unstacked arms; it has a different conformation from HJ DNA in complex with RuvA. In the full resolvosome a probable DNA-RuvA(4)-RuvB(12)-RuvC(2) complex forms which resolves the HJ. Mg(2+) is required as a cofactor.

Its subcellular location is the cytoplasm. The enzyme catalyses Endonucleolytic cleavage at a junction such as a reciprocal single-stranded crossover between two homologous DNA duplexes (Holliday junction).. Functionally, the RuvA-RuvB-RuvC complex processes Holliday junction (HJ) DNA during genetic recombination and DNA repair. Endonuclease that resolves HJ intermediates. Cleaves cruciform DNA by making single-stranded nicks across the HJ at symmetrical positions within the homologous arms, yielding a 5'-phosphate and a 3'-hydroxyl group; requires a central core of homology in the junction. The consensus cleavage sequence is 5'-(A/T)TT(C/G)-3'. Cleavage occurs on the 3'-side of the TT dinucleotide at the point of strand exchange. HJ branch migration catalyzed by RuvA-RuvB allows RuvC to scan DNA until it finds its consensus sequence, where it cleaves and resolves the cruciform DNA. The polypeptide is Crossover junction endodeoxyribonuclease RuvC (Salmonella agona (strain SL483)).